The following is a 185-amino-acid chain: Pyridoxal 5'-phosphate synthase subunit PdxT (185 aa).

Glycine 46–serine 48 serves as a coordination point for L-glutamine. Cysteine 78 (nucleophile) is an active-site residue. Residues arginine 106 and isoleucine 132 to arginine 133 each bind L-glutamine. Residues histidine 168 and glutamate 170 each act as charge relay system in the active site.

The protein belongs to the glutaminase PdxT/SNO family. As to quaternary structure, in the presence of PdxS, forms a dodecamer of heterodimers. Only shows activity in the heterodimer.

The enzyme catalyses aldehydo-D-ribose 5-phosphate + D-glyceraldehyde 3-phosphate + L-glutamine = pyridoxal 5'-phosphate + L-glutamate + phosphate + 3 H2O + H(+). It carries out the reaction L-glutamine + H2O = L-glutamate + NH4(+). It functions in the pathway cofactor biosynthesis; pyridoxal 5'-phosphate biosynthesis. Catalyzes the hydrolysis of glutamine to glutamate and ammonia as part of the biosynthesis of pyridoxal 5'-phosphate. The resulting ammonia molecule is channeled to the active site of PdxS. The sequence is that of Pyridoxal 5'-phosphate synthase subunit PdxT from Corynebacterium diphtheriae (strain ATCC 700971 / NCTC 13129 / Biotype gravis).